The following is a 226-amino-acid chain: Phosphoribosylformylglycinamidine synthase subunit PurQ (226 aa).

Residues 2–226 (KIAVVVFPGS…LENGRIKVEA (225 aa)) enclose the Glutamine amidotransferase type-1 domain. The active-site Nucleophile is cysteine 86. Catalysis depends on residues histidine 195 and glutamate 197.

As to quaternary structure, part of the FGAM synthase complex composed of 1 PurL, 1 PurQ and 2 PurS subunits.

It is found in the cytoplasm. It catalyses the reaction N(2)-formyl-N(1)-(5-phospho-beta-D-ribosyl)glycinamide + L-glutamine + ATP + H2O = 2-formamido-N(1)-(5-O-phospho-beta-D-ribosyl)acetamidine + L-glutamate + ADP + phosphate + H(+). The catalysed reaction is L-glutamine + H2O = L-glutamate + NH4(+). It participates in purine metabolism; IMP biosynthesis via de novo pathway; 5-amino-1-(5-phospho-D-ribosyl)imidazole from N(2)-formyl-N(1)-(5-phospho-D-ribosyl)glycinamide: step 1/2. Functionally, part of the phosphoribosylformylglycinamidine synthase complex involved in the purines biosynthetic pathway. Catalyzes the ATP-dependent conversion of formylglycinamide ribonucleotide (FGAR) and glutamine to yield formylglycinamidine ribonucleotide (FGAM) and glutamate. The FGAM synthase complex is composed of three subunits. PurQ produces an ammonia molecule by converting glutamine to glutamate. PurL transfers the ammonia molecule to FGAR to form FGAM in an ATP-dependent manner. PurS interacts with PurQ and PurL and is thought to assist in the transfer of the ammonia molecule from PurQ to PurL. This is Phosphoribosylformylglycinamidine synthase subunit PurQ from Limosilactobacillus reuteri (strain DSM 20016) (Lactobacillus reuteri).